A 150-amino-acid polypeptide reads, in one-letter code: Transcriptional regulator MraZ (150 aa).

SpoVT-AbrB domains follow at residues E6–E52 and A80–K126.

The protein belongs to the MraZ family. In terms of assembly, forms oligomers.

The protein resides in the cytoplasm. It is found in the nucleoid. The protein is Transcriptional regulator MraZ of Syntrophotalea carbinolica (strain DSM 2380 / NBRC 103641 / GraBd1) (Pelobacter carbinolicus).